We begin with the raw amino-acid sequence, 1173 residues long: MSYEYYYQQQQQQQQQQQQQQQQPTFDYASYYDNQQQQHPQPQYPVYDHTAQSNDSQQQHYGSSYVDPTYATTSTTQQQQQQPSIYDYNTGGNRNSGQYDQYNTTNTTTPNTTQNYDYSNTSGNRNSGQYDQYTTTNTTSANTYGYDNSKTHSPTPSSYDYSTNSYYSQQQQQQPTPTVAATNNTTNTSTNYDSYYQPPAQRNSYDYSQTQQQHSPTSSYDYSQVTNNTATNYDSYYQQPTTPTSTSSSSSTTTTTTTDNQSKFEKSQSLKNMDHFIKGTPSNTPSATINSWDYNQQQPQPQQPQSVYNNPSSSTTNTTYNNPSTTTTTSSPTNTNTTYNNPSSATNTNYNNRNSWGYDQSTYNNSSYNNNTDTYSNQTQQQEYQVLYDKKYQEEEEKRRKEYEESWRVYYEQQAAYEKEQERIRNEEMEKIRIKHEEESNRLKNELEKQRDEIQKMKDQLVQQQNASKKKGEEDLKQMEQAKQAALQWQQEEMKRQLIEVQKERDLSRKHEEQVRLALLEEQRVIKEKLDEKQQQLISQQQAFQSKLHQDECSRKVEEEKKCEEMKKREFELLERNKELDALKSKLQSDLTTSLKSKEDLENQRKALEETTLREKKEIQIYKQSIDEETKRKKLEIEQARQQEEKKLKEQQDHINRQKEMVDCQQRELLVQINQSKQATIDSLQPMRNMLSTLNINNKNSPASNIALKNKDDQNINDNLPQQKPVIPSRNSSHLPKLSPTIQQPQPQQEQPPQQQQQQQQQQQQQQQQQQPVKIVKTYTQKELDQIVDGNYRFGDIIRVQRVSRKWLARKKFKDLVKMKLLSNDPETENMRNRFKSVNELYSTELSYLNSLLILRDFYFIPMEVEARVTKLFKSEEINKVFSNLKSILQISTEITHLLEERLSVSPVKIGDIFVKFAPIFKIYVEYVNNFDKVAPQLKAMTENPQSKKFFSEQRNKSRVATDINSLLIMPVQRCPRYELLLREILKHTQEDHVEFKNIKSAYESIKDINKYINDRKRNVDNRAKLLELQKEIKNAPELIESHRYFVRESQCNISANKKSESGGFYLFFFNDMVLVTKKSSLFSNYKYVYTIPLKNADIKDISSNDSMIRIIVGSLESIDVLIYTISLPSKKDKESWLQDLSVELKPKGIEIGQYSSSQLLESQVQFSNSKTK.

Disordered regions lie at residues 1 to 380 (MSYE…NQTQ), 458 to 479 (KDQL…LKQM), and 712 to 765 (DDQN…QQQQ). 2 stretches are compositionally biased toward low complexity: residues 8–23 (QQQQ…QQQQ) and 35–45 (QQQQHPQPQYP). Positions 50 to 62 (TAQSNDSQQQHYG) are enriched in polar residues. Low complexity-rich tracts occupy residues 72-82 (TTSTTQQQQQQ) and 98-118 (QYDQ…NYDY). Over residues 119 to 133 (SNTSGNRNSGQYDQY) the composition is skewed to polar residues. Composition is skewed to low complexity over residues 134 to 143 (TTTNTTSANT), 153 to 191 (SPTP…TSTN), and 208 to 219 (SQTQQQHSPTSS). Polar residues predominate over residues 220–239 (YDYSQVTNNTATNYDSYYQQ). The segment covering 240 to 258 (PTTPTSTSSSSSTTTTTTT) has biased composition (low complexity). Residues 262–277 (SKFEKSQSLKNMDHFI) are compositionally biased toward basic and acidic residues. Residues 280-295 (TPSNTPSATINSWDYN) are compositionally biased toward polar residues. Positions 296 to 380 (QQQPQPQQPQ…NTDTYSNQTQ (85 aa)) are enriched in low complexity. Residues 470–479 (KKGEEDLKQM) are compositionally biased toward basic and acidic residues. Over residues 743–765 (QQPQPQQEQPPQQQQQQQQQQQQ) the composition is skewed to low complexity. In terms of domain architecture, IQ spans 793 to 822 (RFGDIIRVQRVSRKWLARKKFKDLVKMKLL). One can recognise a DH domain in the interval 833–1016 (NRFKSVNELY…KDINKYINDR (184 aa)). Positions 1044 to 1146 (RYFVRESQCN…WLQDLSVELK (103 aa)) constitute a PH domain.

In terms of biological role, GTPase-activating protein. The sequence is that of Rac guanine nucleotide exchange factor JJ (gxcJJ) from Dictyostelium discoideum (Social amoeba).